Reading from the N-terminus, the 262-residue chain is Phosphonates import ATP-binding protein PhnC (262 aa).

An ABC transporter domain is found at 5 to 253; that stretch reads IRVEKLAKTF…RFDHLYRSIN (249 aa). 37-44 provides a ligand contact to ATP; that stretch reads GPSGSGKS.

Belongs to the ABC transporter superfamily. Phosphonates importer (TC 3.A.1.9.1) family. As to quaternary structure, the complex is composed of two ATP-binding proteins (PhnC), two transmembrane proteins (PhnE) and a solute-binding protein (PhnD).

Its subcellular location is the cell inner membrane. It carries out the reaction phosphonate(out) + ATP + H2O = phosphonate(in) + ADP + phosphate + H(+). Its function is as follows. Part of the ABC transporter complex PhnCDE involved in phosphonates import. Responsible for energy coupling to the transport system. This Escherichia coli O6:K15:H31 (strain 536 / UPEC) protein is Phosphonates import ATP-binding protein PhnC.